Here is a 337-residue protein sequence, read N- to C-terminus: Mortality factor related protein 1 (337 aa).

A Tudor-knot domain is found at 7-55; sequence FEVGENVACIYKGKPYDAKITDIKTNSDGKELYCVHFKGWNNRYDEKIP. The disordered stretch occupies residues 75–113; the sequence is HNAELPTTALKPKKKSLAAEAPRDDRDDTPGTSKGKKAK. Residues 122–327 form the MRG domain; sequence TADDMKVELP…ASNDYYRRSL (206 aa).

In terms of assembly, component of the SIN3S complex, which contains at least sin-3, hda-1, athp-1 and mrg-1. Interacts with cfp-1, a component of the SET2 complex. Interacts with rfp-1. As to expression, expressed in oocytes (at protein level). Expressed mainly in germ cells, but also at lower levels in several somatic cell types, including intestinal cells.

The protein localises to the nucleus. Its subcellular location is the chromosome. Protein involved in the remodeling of chromatin thereby regulating various processes including transcription, chromosome synapsis and genome integrity. Mainly binds genomic loci carrying trimethylated histone H3 'Lys-36' (H3K36me3) or 'Lys-4' (H3K4me3), and acetylated histone H3 'Lys-9' (H3K9ac), 'Lys-27' (H3K27ac). During meiosis, required for the presynaptic pairing of homologous chromosomal regions outside of the pairing center and for the progression of chromosome synapsis. Essential maternal factor required in postembryonic germline development and in maintaining germ cell identity. Plays an important role in maintaining genomic integrity in primordial germ cells (PGCs) during meiosis by regulating DNA double-strand break (DSB) repair and synapsis. Also, required for chromatin-based transcriptional silencing in PGCs and for silencing of X-linked genes in the maternal germ line. By retaining histone acetyltransferase, cbp-1, in euchromatin, promotes the anchoring of heterochromatin at the inner nuclear membrane in intestinal and hypodermal cells. This chain is Mortality factor related protein 1, found in Caenorhabditis elegans.